Reading from the N-terminus, the 44-residue chain is Metallothionein-4 (44 aa).

This sequence belongs to the metallothionein superfamily. Type 5 family.

Functionally, this protein binds cations of several transition elements. Thought to be involved in metal ion homeostasis. The sequence is that of Metallothionein-4 (MtnD) from Drosophila melanogaster (Fruit fly).